Reading from the N-terminus, the 401-residue chain is Cysteine desulfurase (401 aa).

Residues 72–73, Asn151, Gln179, and 199–201 each bind pyridoxal 5'-phosphate; these read AT and SAH. Lys202 bears the N6-(pyridoxal phosphate)lysine mark. Residue Thr237 coordinates pyridoxal 5'-phosphate. The active-site Cysteine persulfide intermediate is the Cys324. [2Fe-2S] cluster is bound at residue Cys324.

It belongs to the class-V pyridoxal-phosphate-dependent aminotransferase family. NifS/IscS subfamily. Homodimer. Pyridoxal 5'-phosphate is required as a cofactor.

It carries out the reaction (sulfur carrier)-H + L-cysteine = (sulfur carrier)-SH + L-alanine. In terms of biological role, catalyzes the removal of elemental sulfur atoms from cysteine to produce alanine. Seems to participate in the biosynthesis of the nitrogenase metalloclusters by providing the inorganic sulfur required for the Fe-S core formation. The protein is Cysteine desulfurase of Enterobacter agglomerans (Erwinia herbicola).